The primary structure comprises 347 residues: Holliday junction branch migration complex subunit RuvB (347 aa).

Positions 1 to 185 are large ATPase domain (RuvB-L); sequence MSDDPTTPEL…FGFTAHLEFY (185 aa). Residues Leu-24, Arg-25, Gly-66, Lys-69, Thr-70, Thr-71, 132–134, Arg-175, Tyr-185, and Arg-222 each bind ATP; that span reads EDF. Thr-70 is a Mg(2+) binding site. Residues 186–255 form a small ATPAse domain (RuvB-S) region; the sequence is DEGELAQVLA…AVHAALELYD (70 aa). The tract at residues 258–347 is head domain (RuvB-H); that stretch reads ELGLDRLDRA…SQPPSLMDDL (90 aa). DNA contacts are provided by Arg-313 and Arg-318.

It belongs to the RuvB family. Homohexamer. Forms an RuvA(8)-RuvB(12)-Holliday junction (HJ) complex. HJ DNA is sandwiched between 2 RuvA tetramers; dsDNA enters through RuvA and exits via RuvB. An RuvB hexamer assembles on each DNA strand where it exits the tetramer. Each RuvB hexamer is contacted by two RuvA subunits (via domain III) on 2 adjacent RuvB subunits; this complex drives branch migration. In the full resolvosome a probable DNA-RuvA(4)-RuvB(12)-RuvC(2) complex forms which resolves the HJ.

It localises to the cytoplasm. The enzyme catalyses ATP + H2O = ADP + phosphate + H(+). Functionally, the RuvA-RuvB-RuvC complex processes Holliday junction (HJ) DNA during genetic recombination and DNA repair, while the RuvA-RuvB complex plays an important role in the rescue of blocked DNA replication forks via replication fork reversal (RFR). RuvA specifically binds to HJ cruciform DNA, conferring on it an open structure. The RuvB hexamer acts as an ATP-dependent pump, pulling dsDNA into and through the RuvAB complex. RuvB forms 2 homohexamers on either side of HJ DNA bound by 1 or 2 RuvA tetramers; 4 subunits per hexamer contact DNA at a time. Coordinated motions by a converter formed by DNA-disengaged RuvB subunits stimulates ATP hydrolysis and nucleotide exchange. Immobilization of the converter enables RuvB to convert the ATP-contained energy into a lever motion, pulling 2 nucleotides of DNA out of the RuvA tetramer per ATP hydrolyzed, thus driving DNA branch migration. The RuvB motors rotate together with the DNA substrate, which together with the progressing nucleotide cycle form the mechanistic basis for DNA recombination by continuous HJ branch migration. Branch migration allows RuvC to scan DNA until it finds its consensus sequence, where it cleaves and resolves cruciform DNA. The sequence is that of Holliday junction branch migration complex subunit RuvB from Leifsonia xyli subsp. xyli (strain CTCB07).